The sequence spans 301 residues: UPF0282 protein Pcal_1546 (301 aa).

The protein belongs to the UPF0282 family.

The protein is UPF0282 protein Pcal_1546 of Pyrobaculum calidifontis (strain DSM 21063 / JCM 11548 / VA1).